The primary structure comprises 210 residues: Glycerol-3-phosphate acyltransferase 2 (210 aa).

6 consecutive transmembrane segments (helical) span residues 4–24, 54–74, 82–102, 114–134, 141–161, and 163–183; these read LIMV…PAPY, FWPG…AMAV, LGIQ…PVWL, IGIL…CFLV, FPTL…WLGQ, and DLGK…MYIP.

It belongs to the PlsY family. Probably interacts with PlsX.

It localises to the cell membrane. The catalysed reaction is an acyl phosphate + sn-glycerol 3-phosphate = a 1-acyl-sn-glycero-3-phosphate + phosphate. The protein operates within lipid metabolism; phospholipid metabolism. In terms of biological role, catalyzes the transfer of an acyl group from acyl-phosphate (acyl-PO(4)) to glycerol-3-phosphate (G3P) to form lysophosphatidic acid (LPA). This enzyme utilizes acyl-phosphate as fatty acyl donor, but not acyl-CoA or acyl-ACP. The polypeptide is Glycerol-3-phosphate acyltransferase 2 (Dehalococcoides mccartyi (strain ATCC BAA-2266 / KCTC 15142 / 195) (Dehalococcoides ethenogenes (strain 195))).